The sequence spans 690 residues: Elongation factor G (690 aa).

Residues 8–283 (SRCRNIGIMA…AVVDFLPSPS (276 aa)) form the tr-type G domain. GTP-binding positions include 17–24 (AHIDAGKT), 81–85 (DTPGH), and 135–138 (NKMD).

It belongs to the TRAFAC class translation factor GTPase superfamily. Classic translation factor GTPase family. EF-G/EF-2 subfamily.

The protein resides in the cytoplasm. Functionally, catalyzes the GTP-dependent ribosomal translocation step during translation elongation. During this step, the ribosome changes from the pre-translocational (PRE) to the post-translocational (POST) state as the newly formed A-site-bound peptidyl-tRNA and P-site-bound deacylated tRNA move to the P and E sites, respectively. Catalyzes the coordinated movement of the two tRNA molecules, the mRNA and conformational changes in the ribosome. The protein is Elongation factor G of Anaplasma marginale (strain Florida).